A 294-amino-acid chain; its full sequence is Tryptophan 2,3-dioxygenase (294 aa).

Substrate contacts are provided by residues 63 to 67, Tyr125, and Arg129; that span reads FIIQH. His252 contributes to the heme binding site. Thr266 provides a ligand contact to substrate.

It belongs to the tryptophan 2,3-dioxygenase family. As to quaternary structure, homotetramer. Heme is required as a cofactor.

It carries out the reaction L-tryptophan + O2 = N-formyl-L-kynurenine. It functions in the pathway amino-acid degradation; L-tryptophan degradation via kynurenine pathway; L-kynurenine from L-tryptophan: step 1/2. Functionally, heme-dependent dioxygenase that catalyzes the oxidative cleavage of the L-tryptophan (L-Trp) pyrrole ring and converts L-tryptophan to N-formyl-L-kynurenine. Catalyzes the oxidative cleavage of the indole moiety. The chain is Tryptophan 2,3-dioxygenase from Polaromonas sp. (strain JS666 / ATCC BAA-500).